The sequence spans 704 residues: Seven transmembrane domain-containing serine/threonine-protein kinase 2 (704 aa).

Residues 1 to 5 are Extracellular-facing; the sequence is MPSKE. A helical transmembrane segment spans residues 6–26; that stretch reads FIIPLILLCFYSVNGFVAVIS. Residues 27 to 42 are Cytoplasmic-facing; the sequence is SLVELFIHKASWNSIK. A helical transmembrane segment spans residues 43-63; sequence IFFYSLLILQCLCRCIIIGWG. Topologically, residues 64–76 are extracellular; sequence MIETVQGGEFYSN. Residues 77-97 traverse the membrane as a helical segment; sequence FPSLLFISYAGLVALQMIQFL. At 98–121 the chain is on the cytoplasmic side; the sequence is PNDNQYLLLSEGKKNNHKVKVGTN. A helical transmembrane segment spans residues 122 to 142; sequence ILIFFNLFMYFGMFLLFGIAE. Residues 143–185 are Extracellular-facing; sequence KQVGNSTSFNHHGNHNSTTSTSTDEIPLVSTEVGELYLFGDKD. 2 N-linked (GlcNAc...) asparagine glycosylation sites follow: asparagine 147 and asparagine 158. Residues 186–206 form a helical membrane-spanning segment; that stretch reads PIYIVLDCFYFVCLLLLLIFH. The Cytoplasmic portion of the chain corresponds to 207–224; sequence SYVGWKTYKRNKDLFGIK. Residues 225 to 245 form a helical membrane-spanning segment; that stretch reads LNVIHLILLICIFIRSLLVII. At 246 to 265 the chain is on the extracellular side; sequence DPSSPNNSILHIDTESWLIY. An N-linked (GlcNAc...) asparagine glycan is attached at asparagine 251. A helical transmembrane segment spans residues 266–286; that stretch reads IYTISYYVVGEIIPGMLLIVI. Over 287–704 the chain is Cytoplasmic; the sequence is EFLLPYHKRK…WSIEKDSSSK (418 aa). One can recognise a Protein kinase domain in the interval 317-682; it reads IAIHELLGMG…SLGVKFHLAN (366 aa). Residues 323 to 331 and lysine 350 contribute to the ATP site; that span reads LGMGGSGAM. The active-site Proton acceptor is the aspartate 506.

It belongs to the protein kinase superfamily. Ser/Thr protein kinase family.

The protein resides in the membrane. The enzyme catalyses L-seryl-[protein] + ATP = O-phospho-L-seryl-[protein] + ADP + H(+). It carries out the reaction L-threonyl-[protein] + ATP = O-phospho-L-threonyl-[protein] + ADP + H(+). The polypeptide is Seven transmembrane domain-containing serine/threonine-protein kinase 2 (7tmk2) (Dictyostelium discoideum (Social amoeba)).